We begin with the raw amino-acid sequence, 66 residues long: Large ribosomal subunit protein bL33c (66 aa).

It belongs to the bacterial ribosomal protein bL33 family.

It is found in the plastid. It localises to the chloroplast. The sequence is that of Large ribosomal subunit protein bL33c (rpl33) from Arabidopsis thaliana (Mouse-ear cress).